The following is a 305-amino-acid chain: Formamidopyrimidine-DNA glycosylase (305 aa).

Catalysis depends on Pro-2, which acts as the Schiff-base intermediate with DNA. Glu-3 (proton donor) is an active-site residue. The active-site Proton donor; for beta-elimination activity is the Lys-59. Residues His-92, Arg-111, and Arg-154 each coordinate DNA. An FPG-type zinc finger spans residues Gln-239–Pro-273. Catalysis depends on Arg-263, which acts as the Proton donor; for delta-elimination activity. A disordered region spans residues Pro-282 to Glu-305.

This sequence belongs to the FPG family. As to quaternary structure, monomer. Zn(2+) serves as cofactor.

It catalyses the reaction Hydrolysis of DNA containing ring-opened 7-methylguanine residues, releasing 2,6-diamino-4-hydroxy-5-(N-methyl)formamidopyrimidine.. The enzyme catalyses 2'-deoxyribonucleotide-(2'-deoxyribose 5'-phosphate)-2'-deoxyribonucleotide-DNA = a 3'-end 2'-deoxyribonucleotide-(2,3-dehydro-2,3-deoxyribose 5'-phosphate)-DNA + a 5'-end 5'-phospho-2'-deoxyribonucleoside-DNA + H(+). Functionally, involved in base excision repair of DNA damaged by oxidation or by mutagenic agents. Acts as a DNA glycosylase that recognizes and removes damaged bases. Has a preference for oxidized purines, such as 7,8-dihydro-8-oxoguanine (8-oxoG). Has AP (apurinic/apyrimidinic) lyase activity and introduces nicks in the DNA strand. Cleaves the DNA backbone by beta-delta elimination to generate a single-strand break at the site of the removed base with both 3'- and 5'-phosphates. The protein is Formamidopyrimidine-DNA glycosylase of Symbiobacterium thermophilum (strain DSM 24528 / JCM 14929 / IAM 14863 / T).